The sequence spans 775 residues: 1,4-alpha-glucan branching enzyme GlgB (775 aa).

Positions 1 to 39 are disordered; the sequence is MTSVHDFATATRPATPSAAAQEPAPALPPGLDRNTLDAL. The segment covering 8-24 has biased composition (low complexity); it reads ATATRPATPSAAAQEPA. The Nucleophile role is filled by Asp454. Catalysis depends on Glu507, which acts as the Proton donor.

The protein belongs to the glycosyl hydrolase 13 family. GlgB subfamily. Monomer.

It carries out the reaction Transfers a segment of a (1-&gt;4)-alpha-D-glucan chain to a primary hydroxy group in a similar glucan chain.. It participates in glycan biosynthesis; glycogen biosynthesis. Functionally, catalyzes the formation of the alpha-1,6-glucosidic linkages in glycogen by scission of a 1,4-alpha-linked oligosaccharide from growing alpha-1,4-glucan chains and the subsequent attachment of the oligosaccharide to the alpha-1,6 position. This chain is 1,4-alpha-glucan branching enzyme GlgB, found in Ralstonia nicotianae (strain ATCC BAA-1114 / GMI1000) (Ralstonia solanacearum).